The following is a 325-amino-acid chain: Hexaprenyl-diphosphate synthase large subunit ((2E,6E)-farnesyl-diphosphate specific) (325 aa).

K45, R48, and H77 together coordinate isopentenyl diphosphate. 3 residues coordinate all-trans-hexaprenyl diphosphate: D84, D88, and R93. The Mg(2+) site is built by D84 and D88. R94 contacts isopentenyl diphosphate. Residues K170, T171, and Q208 each contribute to the all-trans-hexaprenyl diphosphate site.

This sequence belongs to the FPP/GGPP synthase family. As to quaternary structure, dimer of heterodimer or heterotetramer composed of a small (Hexs-a) and large (Hexs-B) subunit. It depends on Mg(2+) as a cofactor.

It catalyses the reaction 3 isopentenyl diphosphate + (2E,6E)-farnesyl diphosphate = all-trans-hexaprenyl diphosphate + 3 diphosphate. Functionally, catalyzes the condensation of three molecules of isopentenyl diphosphate with farnesyl diphosphate (FPP) to yield (all-E)-hexaprenyl diphosphate (HexPP; C30), the precursor of the prenyl side chain of menaquinone-6. Large subunit Hexs-B catalyzes the condensation reaction and the final product chain length is cooperatively regulated by both the Hexs-A and Hexs-B subunits using the whole size of the hydrophobic cleft as a ruler. The polypeptide is Hexaprenyl-diphosphate synthase large subunit ((2E,6E)-farnesyl-diphosphate specific) (hexs-b) (Micrococcus luteus (Micrococcus lysodeikticus)).